Here is a 149-residue protein sequence, read N- to C-terminus: Myoglobin (149 aa).

Residue alanine 2 is modified to N-acetylalanine. A Globin domain is found at 2–143; it reads ABWDKVNSVW…ICSDIEKEYK (142 aa). Histidine 89 provides a ligand contact to heme b.

It belongs to the globin family. As to quaternary structure, monomeric.

It localises to the cytoplasm. Its subcellular location is the sarcoplasm. It carries out the reaction Fe(III)-heme b-[protein] + nitric oxide + H2O = Fe(II)-heme b-[protein] + nitrite + 2 H(+). It catalyses the reaction H2O2 + AH2 = A + 2 H2O. Functionally, monomeric heme protein which primary function is to store oxygen and facilitate its diffusion within muscle tissues. Reversibly binds oxygen through a pentacoordinated heme iron and enables its timely and efficient release as needed during periods of heightened demand. Depending on the oxidative conditions of tissues and cells, and in addition to its ability to bind oxygen, it also has a nitrite reductase activity whereby it regulates the production of bioactive nitric oxide. Under stress conditions, like hypoxia and anoxia, it also protects cells against reactive oxygen species thanks to its pseudoperoxidase activity. The polypeptide is Myoglobin (mb) (Hemitriakis japanica (Japanese topeshark)).